Here is a 270-residue protein sequence, read N- to C-terminus: Putative phosphoenolpyruvate synthase regulatory protein (270 aa).

G150 to T157 serves as a coordination point for ADP.

This sequence belongs to the pyruvate, phosphate/water dikinase regulatory protein family. PSRP subfamily.

It catalyses the reaction [pyruvate, water dikinase] + ADP = [pyruvate, water dikinase]-phosphate + AMP + H(+). The enzyme catalyses [pyruvate, water dikinase]-phosphate + phosphate + H(+) = [pyruvate, water dikinase] + diphosphate. Its function is as follows. Bifunctional serine/threonine kinase and phosphorylase involved in the regulation of the phosphoenolpyruvate synthase (PEPS) by catalyzing its phosphorylation/dephosphorylation. This Aeromonas hydrophila subsp. hydrophila (strain ATCC 7966 / DSM 30187 / BCRC 13018 / CCUG 14551 / JCM 1027 / KCTC 2358 / NCIMB 9240 / NCTC 8049) protein is Putative phosphoenolpyruvate synthase regulatory protein.